We begin with the raw amino-acid sequence, 93 residues long: Large ribosomal subunit protein uL23cz/uL23cy (93 aa).

The protein belongs to the universal ribosomal protein uL23 family. In terms of assembly, part of the 50S ribosomal subunit.

It is found in the plastid. The protein resides in the chloroplast. In terms of biological role, binds to 23S rRNA. The chain is Large ribosomal subunit protein uL23cz/uL23cy (rpl23-A) from Nandina domestica (Heavenly bamboo).